The chain runs to 194 residues: Adenylate kinase (194 aa).

Gly-10–Thr-15 is an ATP binding site. The NMP stretch occupies residues Ser-30 to Val-59. AMP-binding positions include Thr-31, Arg-36, Gly-57–Val-59, Gly-85–Arg-88, and Gln-92. The tract at residues Asn-126–Asp-142 is LID. Arg-127 contributes to the ATP binding site. AMP contacts are provided by Arg-139 and Arg-150. An ATP-binding site is contributed by Ala-178.

Belongs to the adenylate kinase family. Monomer.

The protein localises to the cytoplasm. It carries out the reaction AMP + ATP = 2 ADP. The protein operates within purine metabolism; AMP biosynthesis via salvage pathway; AMP from ADP: step 1/1. In terms of biological role, catalyzes the reversible transfer of the terminal phosphate group between ATP and AMP. Plays an important role in cellular energy homeostasis and in adenine nucleotide metabolism. This is Adenylate kinase from Azorhizobium caulinodans (strain ATCC 43989 / DSM 5975 / JCM 20966 / LMG 6465 / NBRC 14845 / NCIMB 13405 / ORS 571).